The following is a 261-amino-acid chain: UPF0246 protein Reut_A1014 (261 aa).

This sequence belongs to the UPF0246 family.

The chain is UPF0246 protein Reut_A1014 from Cupriavidus pinatubonensis (strain JMP 134 / LMG 1197) (Cupriavidus necator (strain JMP 134)).